Consider the following 624-residue polypeptide: Ferredoxin-fold anticodon-binding domain-containing protein 1 (624 aa).

An FDX-ACB domain is found at 531–624 (LYPPCYVHDV…IQQHLYVIPR (94 aa)).

The sequence is that of Ferredoxin-fold anticodon-binding domain-containing protein 1 (FDXACB1) from Homo sapiens (Human).